A 252-amino-acid polypeptide reads, in one-letter code: 3-deoxy-manno-octulosonate cytidylyltransferase (252 aa).

It belongs to the KdsB family.

The protein localises to the cytoplasm. It catalyses the reaction 3-deoxy-alpha-D-manno-oct-2-ulosonate + CTP = CMP-3-deoxy-beta-D-manno-octulosonate + diphosphate. It participates in nucleotide-sugar biosynthesis; CMP-3-deoxy-D-manno-octulosonate biosynthesis; CMP-3-deoxy-D-manno-octulosonate from 3-deoxy-D-manno-octulosonate and CTP: step 1/1. Its pathway is bacterial outer membrane biogenesis; lipopolysaccharide biosynthesis. Functionally, activates KDO (a required 8-carbon sugar) for incorporation into bacterial lipopolysaccharide in Gram-negative bacteria. This chain is 3-deoxy-manno-octulosonate cytidylyltransferase, found in Nitratidesulfovibrio vulgaris (strain ATCC 29579 / DSM 644 / CCUG 34227 / NCIMB 8303 / VKM B-1760 / Hildenborough) (Desulfovibrio vulgaris).